We begin with the raw amino-acid sequence, 187 residues long: EP300-interacting inhibitor of differentiation 1 (187 aa).

A disordered region spans residues 1–118 (MSEMAELSEL…YDYPEEEQLS (118 aa)). 2 stretches are compositionally biased toward acidic residues: residues 52-63 (LEEEGPMEEEEA) and 93-116 (FESEDEGEEFDDWEDDYDYPEEEQ). An interaction with NR0B2 region spans residues 54–120 (EEGPMEEEEA…YPEEEQLSGA (67 aa)). The LXCXE motif motif lies at 178–182 (LGCDE).

In terms of assembly, interacts via its LXCXE motif with the entire pocket region of RB1. Interacts with EP300, NR0B2 and TRIM27. In terms of processing, ubiquitinated in U2OS osteosarcoma cells and is rapidly degraded by proteasome as cells exit the cell cycle exit. As to expression, widely expressed. Most abundantly expressed in heart, skeletal muscle, pancreas, brain and testis. Expressed at much lower levels in placenta and peripheral blood leukocyte. Barely detectable in lung. Also weakly expressed in lung carcinoma A-549 and various leukemia cell lines.

Its subcellular location is the nucleus. It localises to the cytoplasm. Interacts with RB1 and EP300 and acts as a repressor of MYOD1 transactivation. Inhibits EP300 and CBP histone acetyltransferase activity. May be involved in coupling cell cycle exit to the transcriptional activation of genes required for cellular differentiation. May act as a candidate coinhibitory factor for NR0B2 that can be directly linked to transcription inhibitory mechanisms. This Homo sapiens (Human) protein is EP300-interacting inhibitor of differentiation 1.